The following is a 306-amino-acid chain: UDP-3-O-acyl-N-acetylglucosamine deacetylase (306 aa).

3 residues coordinate Zn(2+): histidine 79, histidine 238, and aspartate 242. Residue histidine 265 is the Proton donor of the active site.

Belongs to the LpxC family. Zn(2+) serves as cofactor.

It catalyses the reaction a UDP-3-O-[(3R)-3-hydroxyacyl]-N-acetyl-alpha-D-glucosamine + H2O = a UDP-3-O-[(3R)-3-hydroxyacyl]-alpha-D-glucosamine + acetate. The protein operates within glycolipid biosynthesis; lipid IV(A) biosynthesis; lipid IV(A) from (3R)-3-hydroxytetradecanoyl-[acyl-carrier-protein] and UDP-N-acetyl-alpha-D-glucosamine: step 2/6. Functionally, catalyzes the hydrolysis of UDP-3-O-myristoyl-N-acetylglucosamine to form UDP-3-O-myristoylglucosamine and acetate, the committed step in lipid A biosynthesis. This is UDP-3-O-acyl-N-acetylglucosamine deacetylase from Shewanella sediminis (strain HAW-EB3).